We begin with the raw amino-acid sequence, 311 residues long: Nuclear hormone receptor family member nhr-111 (311 aa).

A DNA-binding region (nuclear receptor) is located at residues 39–115 (ITLCAVCGDT…KGMNKNAVQP (77 aa)). 2 NR C4-type zinc fingers span residues 42–62 (CAVCGDTSNGNHYGVPTCFGC) and 78–98 (CWNGDGNCVIDKANRNRCKSC). Residues 116–311 (ERTSHSYTVE…KACEIVISFL (196 aa)) form the NR LBD domain.

Belongs to the nuclear hormone receptor family.

Its subcellular location is the nucleus. Orphan nuclear receptor. The polypeptide is Nuclear hormone receptor family member nhr-111 (nhr-111) (Caenorhabditis elegans).